Reading from the N-terminus, the 440-residue chain is Amino acid transporter AVT6D (440 aa).

The next 11 membrane-spanning stretches (helical) occupy residues 26-46 (FAGA…MAIP), 47-67 (AAFK…IAWL), 102-122 (AVTV…SIII), 149-169 (WNTR…PLVL), 182-202 (ISFL…IIAL), 219-239 (GGLS…AFTF), 262-282 (ISVI…YLLF), 309-329 (IVRL…NFSL), 356-376 (FPLL…WYFF), 377-397 (QFLG…AIVL), and 410-430 (IVAS…ISTN).

This sequence belongs to the amino acid/polyamine transporter 2 family. Amino acid/auxin permease (AAAP) (TC 2.A.18.6) subfamily.

It is found in the membrane. The sequence is that of Amino acid transporter AVT6D from Arabidopsis thaliana (Mouse-ear cress).